The primary structure comprises 121 residues: Small ribosomal subunit protein uS13 (121 aa).

The tract at residues 91-121 is disordered; sequence HRRGLPVRGQKTKNNARTRKGPVKTVANKKK.

It belongs to the universal ribosomal protein uS13 family. As to quaternary structure, part of the 30S ribosomal subunit. Forms a loose heterodimer with protein S19. Forms two bridges to the 50S subunit in the 70S ribosome.

Functionally, located at the top of the head of the 30S subunit, it contacts several helices of the 16S rRNA. In the 70S ribosome it contacts the 23S rRNA (bridge B1a) and protein L5 of the 50S subunit (bridge B1b), connecting the 2 subunits; these bridges are implicated in subunit movement. Contacts the tRNAs in the A and P-sites. This is Small ribosomal subunit protein uS13 from Staphylococcus epidermidis (strain ATCC 35984 / DSM 28319 / BCRC 17069 / CCUG 31568 / BM 3577 / RP62A).